A 343-amino-acid polypeptide reads, in one-letter code: Cytoplasmic tRNA 2-thiolation protein 1 (343 aa).

The protein belongs to the TtcA family. CTU1/NCS6/ATPBD3 subfamily.

The protein resides in the cytoplasm. The protein operates within tRNA modification; 5-methoxycarbonylmethyl-2-thiouridine-tRNA biosynthesis. Functionally, plays a central role in 2-thiolation of mcm(5)S(2)U at tRNA wobble positions of tRNA(Lys), tRNA(Glu) and tRNA(Gln). Directly binds tRNAs and probably acts by catalyzing adenylation of tRNAs, an intermediate required for 2-thiolation. It is unclear whether it acts as a sulfurtransferase that transfers sulfur from thiocarboxylated URM1 onto the uridine of tRNAs at wobble position. The chain is Cytoplasmic tRNA 2-thiolation protein 1 from Drosophila willistoni (Fruit fly).